A 768-amino-acid chain; its full sequence is MCGSALGLPPAAFVRLRSCRPGPAAFLRAAWVLSLVLGLGRSENSRCASSHAVSCSECLALGPDCGWCVHEDFISGGPRSERCDIVSNLISKGCPVDSIEYPSVHVTIPSENEVNTQVTPGEVSIQLRPGAAANFMLKIHPLKKYPVDLYYLVDVSASMHNNIEKLNSVGNDLSRKMAFFSRDFRLGFGSYVDKTVSPYISIHPERIHNQCSDYNLDCMPPHGYIHVLSLTENITEFERAVHRQKISGNIDTPEGGFDAMLQAAVCESHIGWRKEAKRLLLVMTDQTSHLALDSKLAGIVVPNDGNCHLRNNVYVKSTTMEHPSLGQLSEKLIDNNINVIFAVQGKQFHWYKDLLPLLPGTIAGEIESKAANLNNLVVEAYQKLISEVKVQVESKVPGVYFNVTAICPDGARKLGMEGCSNVTSSDEVLFNVTVTMEKCSVTGGKNYAIIKPIGFNETSKIHIHQNCGCECEASRGGAAKCAEEAPLDSTCPQCQESQCHQEEAQSPSQGCKAHEDQPVCSGRGVCVCGKCLCHKMKLGKVYGKYCEKDDFSCPYHHGSLCAGHGECEAGRCQCFSGWEGDRCQCPSAAAQHCVNSKGQVCSGRGTCVCGRCECSDPRSIGRFCEHCPTCPTACSENWNCVQCLHPHNLSQAILDQCRTSCASMEQPYVEQASECFSSPSYLRIFFIIFIVTFLIGLLKILIIRQVILQWNSSKIKSSSDYRVSASKKDKLILQSVCTRAVTYRREKPEEIKLDISKLNAHETFRCNF.

Residues 1–42 form the signal peptide; that stretch reads MCGSALGLPPAAFVRLRSCRPGPAAFLRAAWVLSLVLGLGRS. Residues 43–683 are Extracellular-facing; it reads ENSRCASSHA…ECFSSPSYLR (641 aa). The region spanning 46 to 95 is the PSI domain; it reads RCASSHAVSCSECLALGPDCGWCVHEDFISGGPRSERCDIVSNLISKGCP. Intrachain disulfides connect Cys-47/Cys-65, Cys-55/Cys-469, Cys-58/Cys-83, Cys-68/Cys-94, Cys-211/Cys-218, Cys-266/Cys-307, Cys-407/Cys-419, Cys-439/Cys-467, Cys-471/Cys-491, Cys-471/Cys-494, Cys-481/Cys-494, Cys-499/Cys-528, Cys-511/Cys-526, Cys-520/Cys-531, Cys-533/Cys-546, Cys-553/Cys-567, Cys-561/Cys-572, Cys-574/Cys-583, Cys-585/Cys-609, Cys-593/Cys-607, Cys-601/Cys-612, Cys-614/Cys-624, Cys-627/Cys-630, Cys-634/Cys-661, and Cys-640/Cys-657. A VWFA domain is found at 146–384; the sequence is PVDLYYLVDV…NLVVEAYQKL (239 aa). Positions 154 and 156 each coordinate Mg(2+). Asp-193 contacts Ca(2+). An N-linked (GlcNAc...) asparagine glycan is attached at Asn-233. Asn-249, Asp-251, Pro-253, and Glu-254 together coordinate Ca(2+). Residue Glu-254 coordinates Mg(2+). Residue Asn-402 is glycosylated (N-linked (GlcNAc...) asparagine). N-linked (GlcNAc...) asparagine glycans are attached at residues Asn-421, Asn-431, and Asn-456. 4 I-EGF domains span residues 471 to 495, 499 to 547, 548 to 584, and 585 to 625; these read CEAS…PQCQ, CHQE…KYCE, KDDF…DRCQ, and CPSA…RFCE. N-linked (GlcNAc...) asparagine glycosylation is present at Asn-648. A helical membrane pass occupies residues 684 to 703; the sequence is IFFIIFIVTFLIGLLKILII. Over 704 to 768 the chain is Cytoplasmic; sequence RQVILQWNSS…NAHETFRCNF (65 aa).

This sequence belongs to the integrin beta chain family. In terms of assembly, heterodimer of an alpha and a beta subunit. Beta-8 (ITGB8) associates with alpha-V (ITGAV) to form ITGAV:ITGB8. ITGAV:ITGB8 interacts with TGFB1. As to expression, placenta, kidney, brain, ovary, uterus and in several transformed cells.

It is found in the cell membrane. Its function is as follows. Integrin alpha-V:beta-8 (ITGAV:ITGB8) is a receptor for fibronectin. It recognizes the sequence R-G-D in its ligands. Integrin alpha-V:beta-6 (ITGAV:ITGB6) mediates R-G-D-dependent release of transforming growth factor beta-1 (TGF-beta-1) from regulatory Latency-associated peptide (LAP), thereby playing a key role in TGF-beta-1 activation on the surface of activated regulatory T-cells (Tregs). Required during vasculogenesis. The polypeptide is Integrin beta-8 (ITGB8) (Oryctolagus cuniculus (Rabbit)).